Here is a 160-residue protein sequence, read N- to C-terminus: Large ribosomal subunit protein uL22c (160 aa).

It belongs to the universal ribosomal protein uL22 family. In terms of assembly, part of the 50S ribosomal subunit.

Its subcellular location is the plastid. It is found in the chloroplast. This protein binds specifically to 23S rRNA. In terms of biological role, the globular domain of the protein is located near the polypeptide exit tunnel on the outside of the subunit, while an extended beta-hairpin is found that lines the wall of the exit tunnel in the center of the 70S ribosome. This is Large ribosomal subunit protein uL22c (rpl22) from Arabidopsis thaliana (Mouse-ear cress).